The sequence spans 526 residues: Thymocyte selection-associated high mobility group box protein TOX (526 aa).

A compositionally biased stretch (polar residues) spans 194–203 (NMGGTNVAHN). Positions 194–264 (NMGGTNVAHN…KKDPNEPQKP (71 aa)) are disordered. Low complexity predominate over residues 209-220 (GSKSATPSPSSS). Positions 228–245 (DASKINGGEKRPASDMGK) are enriched in basic and acidic residues. Positions 237 to 256 (KRPASDMGKKPKTPKKKKKK) match the Nuclear localization signal motif. Positions 246-256 (KPKTPKKKKKK) are enriched in basic residues. A DNA-binding region (HMG box) is located at residues 261–329 (PQKPVSAYAL…EYLKQLAAYR (69 aa)).

Belongs to the high motility group (HMG) box superfamily. Interacts with HBO1 complex composed at least of KAT7/HBO1, ING4, MEAF6, and JADE2; this complex is involved in histone acetylation. Interacts with DNMT1, LEO1, PAF1, SAP130 and SIN3A; these interactors regulate chromatin remodeling. Interacts with an array of proteins involved in RNA processing and translation and DNA replication. Expressed in neurons of the subventricular zone (at protein level). Expressed in distinct subpopulations of thymocytes undergoing positive selection: double CD4-positive CD8-positive (DP) cells, CD4-positive CD8-low transitional cells and in single CD4-positive and CD8-positive cells (at protein level). Expressed in ILC progenitors and mature ILC subsets: ILC1, ILC2 and ILC3 (at protein level). Expressed in lymphoid tissue-inducer cells and bone marrow NK cell subsets. Abundant in thymus, liver and brain. Also detected in small intestine, spleen, stomach and testis. Highly expressed in tumor-infiltrating CD8-positive T cells (at protein level).

The protein resides in the nucleus. Functionally, transcriptional regulator with a major role in neural stem cell commitment and corticogenesis as well as in lymphoid cell development and lymphoid tissue organogenesis. Binds to GC-rich DNA sequences in the proximity of transcription start sites and may alter chromatin structure, modifying access of transcription factors to DNA. During cortical development, controls the neural stem cell pool by inhibiting the switch from proliferative to differentiating progenitors. Beyond progenitor cells, promotes neurite outgrowth in newborn neurons migrating to reach the cortical plate. May activate or repress critical genes for neural stem cell fate such as SOX2, EOMES and ROBO2. Plays an essential role in the development of lymphoid tissue-inducer (LTi) cells, a subset necessary for the formation of secondary lymphoid organs: peripheral lymph nodes and Peyer's patches. Acts as a developmental checkpoint and regulates thymocyte positive selection toward T cell lineage commitment. Required for the development of various T cell subsets, including CD4-positive helper T cells, CD8-positive cytotoxic T cells, regulatory T cells and CD1D-dependent natural killer T (NKT) cells. Required for the differentiation of common lymphoid progenitors (CMP) to innate lymphoid cells (ILC). May regulate the NOTCH-mediated gene program, promoting differentiation of the ILC lineage. Required at the progenitor phase of NK cell development in the bone marrow to specify NK cell lineage commitment. Upon chronic antigen stimulation, diverts T cell development by promoting the generation of exhaustive T cells, while suppressing effector and memory T cell programming. May regulate the expression of genes encoding inhibitory receptors such as PDCD1 and induce the exhaustion program, to prevent the overstimulation of T cells and activation-induced cell death. The polypeptide is Thymocyte selection-associated high mobility group box protein TOX (Mus musculus (Mouse)).